A 229-amino-acid polypeptide reads, in one-letter code: Cytidylate kinase (229 aa).

10–18 serves as a coordination point for ATP; sequence GYSSCGKST.

It belongs to the cytidylate kinase family. Type 1 subfamily.

Its subcellular location is the cytoplasm. It catalyses the reaction CMP + ATP = CDP + ADP. The catalysed reaction is dCMP + ATP = dCDP + ADP. This Phocaeicola vulgatus (strain ATCC 8482 / DSM 1447 / JCM 5826 / CCUG 4940 / NBRC 14291 / NCTC 11154) (Bacteroides vulgatus) protein is Cytidylate kinase.